The primary structure comprises 125 residues: Probable mercury resistance operon repressor (125 aa).

The region spanning 15–109 is the HTH arsR-type domain; that stretch reads VPCTHPDTTA…LARCLAADNA (95 aa). Residues 49 to 68 constitute a DNA-binding region (H-T-H motif); the sequence is SAECVEHAGISQPRVSVHLS. Hg(2+) contacts are provided by cysteine 69, cysteine 73, and cysteine 114.

Its function is as follows. Negatively regulates the mercuric reductase merA and the organolyase merB in the absence of mercuric ions. This is Probable mercury resistance operon repressor (merR) from Streptomyces lividans.